The sequence spans 517 residues: DNA-binding protein (517 aa).

Positions 1–10 are enriched in polar residues; sequence MASRGGNQSS. The interval 1–110 is disordered; the sequence is MASRGGNQSS…DISQDSEEER (110 aa). Low complexity predominate over residues 64-80; sequence VLVSETSRSSLSPERSN. Residues 87 to 96 are compositionally biased toward basic residues; sequence PKKKPRKTKH. Phosphotyrosine; by host is present on Tyr-180. 2 residues coordinate Zn(2+): Cys-269 and His-271. The flexible loop stretch occupies residues 282–316; it reads IEMDVASENGQRAMKENPDRAKITQNRWGRNVVQL. 6 residues coordinate Zn(2+): Cys-324, Cys-340, Cys-382, Cys-384, Cys-436, and Cys-453. The interval 501–517 is C-terminal arm, DBP binding; the sequence is VSLPAGHYDSRQNPFDF.

It belongs to the adenoviridae E2A DNA-binding protein family. In terms of assembly, homomultimerizes on viral ssDNA bound to pTP. Forms a initiation complex with viral polymerase, pTP and hosts NFIA and POU2F1/OCT1. Interacts with host SRCAP.

The protein localises to the host nucleus. In terms of biological role, plays a role in the elongation phase of viral strand displacement replication by unwinding the template in an ATP-independent fashion, employing its capacity to form multimers. Also enhances the rate of initiation. Released from template upon second strand synthesis. Assembles in complex with viral pTP, viral pol, host NFIA and host POU2F1/OCT1 on viral origin of replication. Covers the whole ssDNA genome during synthesis. The complementary strand synthesis induces its relese from DNA template. May inhibit cellular transcription mediated by the interaction between host SRCAP and CBP. This is DNA-binding protein from Human adenovirus B serotype 7 (HAdV-7).